Consider the following 972-residue polypeptide: Hyaluronan synthase (972 aa).

Positions 152-325 (KPEHQHVGLS…VSLDWRLEQF (174 aa)) are A1. The tract at residues 432–604 (EDSHINRVPL…IRAWHLTDGF (173 aa)) is A2.

It belongs to the glycosyltransferase 2 family. CS/HAS subfamily. It depends on Mg(2+) as a cofactor. Co(2+) is required as a cofactor.

The protein resides in the cell membrane. It catalyses the reaction [hyaluronan](n) + UDP-N-acetyl-alpha-D-glucosamine = N-acetyl-beta-D-glucosaminyl-(1-&gt;4)-[hyaluronan](n) + UDP + H(+). The catalysed reaction is N-acetyl-beta-D-glucosaminyl-(1-&gt;4)-[hyaluronan](n) + UDP-alpha-D-glucuronate = [hyaluronan](n+1) + UDP + H(+). The enzyme catalyses 3-O-(beta-D-GalNAc-(1-&gt;4)-beta-D-GlcA-(1-&gt;3)-beta-D-Gal-(1-&gt;3)-beta-D-Gal-(1-&gt;4)-beta-D-Xyl)-L-seryl-[protein] + UDP-alpha-D-glucuronate = 3-O-(beta-D-GlcA-(1-&gt;3)-beta-D-GalNAc-(1-&gt;4)-beta-D-GlcA-(1-&gt;3)-beta-D-Gal-(1-&gt;3)-beta-D-Gal-(1-&gt;4)-beta-D-Xyl)-L-seryl-[protein] + UDP + H(+). It carries out the reaction 3-O-{[beta-D-GalNAc-(1-&gt;4)-beta-D-GlcA-(1-&gt;3)](n)-beta-D-GalNAc-(1-&gt;4)-beta-D-GlcA-(1-&gt;3)-beta-D-Gal-(1-&gt;3)-beta-D-Gal-(1-&gt;4)-beta-D-Xyl}-L-seryl-[protein] + UDP-alpha-D-glucuronate = 3-O-{beta-D-GlcA-(1-&gt;3)-[beta-D-GalNAc-(1-&gt;4)-beta-D-GlcA-(1-&gt;3)](n)-beta-D-GalNAc-(1-&gt;4)-beta-D-GlcA-(1-&gt;3)-beta-D-Gal-(1-&gt;3)-beta-D-Gal-(1-&gt;4)-beta-D-Xyl}-L-seryl-[protein] + UDP + H(+). Its function is as follows. Catalyzes the polymerization of hyaluronan, a polysaccharide composed of a repeating disaccharide of N-acetylglucosamine (GlcNAc) and glucuronic acid (GlcUA) units. Each unit has the composition in beta-(1-&gt;4)-GlcUA-beta-(1-&gt;3)-GlcNAc. This is Hyaluronan synthase (hyaD) from Pasteurella multocida.